Consider the following 369-residue polypeptide: UPF0324 membrane protein DVU_0543 (369 aa).

A run of 9 helical transmembrane segments spans residues 13–31 (IVPGLLVMVGTLYVLRTYV), 46–65 (WLVQVLSLNYILLSILTGMF), 110–132 (GGVAITLIVAFVFGTAIFIMWLG), 142–164 (TATMAAACGVCGVSAAVATAPGV), 171–193 (LALSIATILGFGIMTMFVSPFIG), 240–262 (WNVVRVICIPFVVFFITAWYWKG), 269–291 (TSLGSILASKFPIFVLGFVGMTA), 306–328 (LHLMRDVMAWIFGVGLVGLGAYI), and 341–363 (LRIGLIAGMVKYILALIIILAFI).

It belongs to the UPF0324 family.

It localises to the cell membrane. In Nitratidesulfovibrio vulgaris (strain ATCC 29579 / DSM 644 / CCUG 34227 / NCIMB 8303 / VKM B-1760 / Hildenborough) (Desulfovibrio vulgaris), this protein is UPF0324 membrane protein DVU_0543.